Reading from the N-terminus, the 367-residue chain is Protein SGT1 homolog (367 aa).

TPR repeat units lie at residues 6–39 (ASDL…SPAT), 40–73 (AELY…DPSM), and 75–107 (KAYL…ASGD). In terms of domain architecture, CS spans 165-254 (KPKYRHDFYN…AEQITWTSLD (90 aa)). 2 disordered regions span residues 261–289 (AVPQ…DWDK) and 347–367 (VGSK…KWEY). The SGS domain occupies 277–367 (SYPSSKSKKD…DGMELKKWEY (91 aa)).

This sequence belongs to the SGT1 family. In terms of assembly, interacts (via CS domain) with RAR1 (via CHORD 2 domain). Interacts with RAD6. In terms of tissue distribution, expressed in roots, root tips, shoot apical meristem (SAM), young leaves, flag leaves and ears.

It localises to the cytoplasm. It is found in the nucleus. In terms of biological role, involved in basal disease resistance to bacterial blight (X.oryzae). May act as positive regulator of basal defense. Probably required for SCF-mediated ubiquitination, by coupling HSP90 to SCF complex for ubiquitination of HSP90 client proteins. The chain is Protein SGT1 homolog from Oryza sativa subsp. japonica (Rice).